Reading from the N-terminus, the 228-residue chain is Ribonuclease 3 (228 aa).

The region spanning 2–130 (LTYLEQKINY…LLAAVYLDGG (129 aa)) is the RNase III domain. Residue E43 coordinates Mg(2+). D47 is a catalytic residue. Positions 116 and 119 each coordinate Mg(2+). E119 is a catalytic residue. Residues 157–226 (DYKTRLQEVV…AMEALSKLGI (70 aa)) form the DRBM domain.

The protein belongs to the ribonuclease III family. Homodimer. Requires Mg(2+) as cofactor.

The protein resides in the cytoplasm. The enzyme catalyses Endonucleolytic cleavage to 5'-phosphomonoester.. In terms of biological role, digests double-stranded RNA. Involved in the processing of primary rRNA transcript to yield the immediate precursors to the large and small rRNAs (23S and 16S). Processes some mRNAs, and tRNAs when they are encoded in the rRNA operon. Processes pre-crRNA and tracrRNA of type II CRISPR loci if present in the organism. In Caldanaerobacter subterraneus subsp. tengcongensis (strain DSM 15242 / JCM 11007 / NBRC 100824 / MB4) (Thermoanaerobacter tengcongensis), this protein is Ribonuclease 3.